The sequence spans 96 residues: Evasin P1074 (96 aa).

Residues 1–28 (MAFNMITFLQMAVFVVILFNINLHSASA) form the signal peptide. 3 cysteine pairs are disulfide-bonded: Cys48–Cys67, Cys52–Cys69, and Cys63–Cys80. N-linked (GlcNAc...) asparagine glycosylation is present at Asn74.

The protein resides in the secreted. Functionally, salivary chemokine-binding protein which binds to host chemokines CXCL1 and CXCL8. This chain is Evasin P1074, found in Ixodes ricinus (Common tick).